Here is a 180-residue protein sequence, read N- to C-terminus: Adenine phosphoribosyltransferase (180 aa).

S2 carries the post-translational modification N-acetylserine. Phosphoserine is present on residues S15 and S30. The residue at position 60 (Y60) is a Phosphotyrosine. At S66 the chain carries Phosphoserine. K114 is modified (N6-acetyllysine). T135 bears the Phosphothreonine mark.

This sequence belongs to the purine/pyrimidine phosphoribosyltransferase family. Homodimer.

Its subcellular location is the cytoplasm. It carries out the reaction AMP + diphosphate = 5-phospho-alpha-D-ribose 1-diphosphate + adenine. The protein operates within purine metabolism; AMP biosynthesis via salvage pathway; AMP from adenine: step 1/1. Functionally, catalyzes a salvage reaction resulting in the formation of AMP, that is energically less costly than de novo synthesis. This is Adenine phosphoribosyltransferase from Mastomys natalensis (African soft-furred rat).